The chain runs to 150 residues: MKVIFLADVKGKGKKGEIKEVLTGYAQNFLIKKNLAKEATSQSIGELKGKQKAEEKAQAEILAEAQAVKAVLDEDKTRVQFQEKVGPDGRTFGSITAKKISEELQKQFGVKVDKRHIVLDHPIRAIGLIEVPVKLHKEVTAEIKLAITEA.

Belongs to the bacterial ribosomal protein bL9 family.

Binds to the 23S rRNA. This is Large ribosomal subunit protein bL9 from Streptococcus pyogenes serotype M6 (strain ATCC BAA-946 / MGAS10394).